The following is a 46-amino-acid chain: uncharacterized protein (46 aa).

A helical transmembrane segment spans residues 12–34 (HFNHFVIALSFIYGLTELGYLLL).

Its subcellular location is the cell membrane. This is an uncharacterized protein from Bacillus subtilis (strain 168).